The following is a 145-amino-acid chain: Large ribosomal subunit protein uL13 (145 aa).

The protein belongs to the universal ribosomal protein uL13 family. Part of the 50S ribosomal subunit.

This protein is one of the early assembly proteins of the 50S ribosomal subunit, although it is not seen to bind rRNA by itself. It is important during the early stages of 50S assembly. The sequence is that of Large ribosomal subunit protein uL13 from Macrococcus caseolyticus (strain JCSC5402) (Macrococcoides caseolyticum).